A 529-amino-acid chain; its full sequence is MSGLLTDPEQRAQEPRYPGFVLGLDVGSSVIRCHVYDRAARVCGSSVQKVENLYPQIGWVEIDPDVLWIQFVAVIKEAVKAAGIQMNQIVGLGISTQRATFITWNKKTGNHFHNFISWQDLRAVELVKSWNNSLLMKIFHSSCRVLHFFTRSKRLFTASLFTFTTQQTSLRLVWILQNLTEVQKAVEEENCCFGTIDTWLLYKLTKGSVYATDFSNASTTGLFDPYKMCWSGMITSLISIPLSLLPPVRDTSHNFGSVDEEIFGVPIPIVALVADQQSAMFGECCFQTGDVKLTMGTGTFLDINTGNSLQQTTGGFYPLIGWKIGQEVVCLAESNAGDTGTAIKWAQQLDLFTDAAETEKMAKSLEDSEGVCFVPSFSGLQAPLNDPWACASFMGLKPSTSKYHLVRAILESIAFRNKQLYEMMKKEIHIPVRKIRADGGVCKNGFVMQMTSDLINENIDRPADIDMSCLGAASLAGLAVGFWTDKEELKKLRQSEVVFKPQKKCQEYEMSLENWAKAVKRSMNWYNKT.

2 residues coordinate ATP: Ser28 and Ser29. 3 residues coordinate glycerol: Arg98, Asp275, and Gln276. 3 residues coordinate ATP: Thr297, Gly340, and Gly440.

This sequence belongs to the FGGY kinase family.

Its subcellular location is the cytoplasm. It carries out the reaction glycerol + ATP = sn-glycerol 3-phosphate + ADP + H(+). The protein operates within polyol metabolism; glycerol degradation via glycerol kinase pathway; sn-glycerol 3-phosphate from glycerol: step 1/1. Skin-specific kinase that plays a key role in glycerol metabolism, catalyzing its phosphorylation to produce sn-glycerol 3-phosphate. Involved in skin-specific regulation of sterol regulatory element-binding protein (SREBP) processing and lipid biosynthesis. The chain is Glycerol kinase 5 from Homo sapiens (Human).